Here is a 121-residue protein sequence, read N- to C-terminus: Large ribosomal subunit protein uL14c (121 aa).

This sequence belongs to the universal ribosomal protein uL14 family. As to quaternary structure, part of the 50S ribosomal subunit.

The protein localises to the plastid. It is found in the chloroplast. Functionally, binds to 23S rRNA. This chain is Large ribosomal subunit protein uL14c, found in Trieres chinensis (Marine centric diatom).